The following is a 62-amino-acid chain: Large ribosomal subunit protein uL29 (62 aa).

Belongs to the universal ribosomal protein uL29 family.

The protein is Large ribosomal subunit protein uL29 of Geotalea daltonii (strain DSM 22248 / JCM 15807 / FRC-32) (Geobacter daltonii).